The primary structure comprises 234 residues: UPF0309 protein lmo0025 (234 aa).

Residues 31 to 205 (VADSIMNDGI…ELMLEKGYTP (175 aa)) enclose the SIS domain.

Belongs to the UPF0309 family.

This chain is UPF0309 protein lmo0025, found in Listeria monocytogenes serovar 1/2a (strain ATCC BAA-679 / EGD-e).